A 95-amino-acid polypeptide reads, in one-letter code: Microcin E492 immunity protein (95 aa).

The next 3 helical transmembrane spans lie at 1–21 (MTLLSFGFSPVFFSVMAFCII), 35–55 (VIVLILLTFFICFLYPLTKVY), and 67–87 (YLFCFISTLIAIAINVVILTI).

Belongs to the MceB microcin immunity protein family.

It localises to the cell inner membrane. Its function is as follows. Protect the producing cell against microcin E492. The polypeptide is Microcin E492 immunity protein (Klebsiella pneumoniae).